Here is a 552-residue protein sequence, read N- to C-terminus: Serine protease 53 (552 aa).

The N-terminal stretch at 1 to 23 is a signal peptide; that stretch reads MRQSWRPELLIVGAVVVIEGLQA. 2 consecutive Peptidase S1 domains span residues 24–273 and 294–525; these read AQRA…AHVH and VACG…NLDW. The disordered stretch occupies residues 27–46; the sequence is ACGQRGPGPPEPQEGNTLPG. A disulfide bond links Cys62 and Cys78. Residues His77 and Asp128 each act as charge relay system in the active site. 4 disulfides stabilise this stretch: Cys158/Cys230, Cys187/Cys209, Cys220/Cys249, and Cys326/Cys342. Catalysis depends on charge relay system residues Ser224, His341, and Asp382. 2 disulfides stabilise this stretch: Cys443–Cys463 and Cys473–Cys501. The active-site Charge relay system is the Ser477.

Belongs to the peptidase S1 family.

It is found in the secreted. In vitro can degrade the fibrinogen alpha chain of as well as pro-urokinase-type plasminogen activator. The sequence is that of Serine protease 53 (Prss53) from Mus musculus (Mouse).